The sequence spans 335 residues: Dye-decolorizing peroxidase (335 aa).

Asp149 functions as the Proton acceptor in the catalytic mechanism. His222 is a binding site for heme. The tract at residues 312-335 (LPQAATPTLAAGSLSIGSLKGSPR) is targeting peptide.

The protein belongs to the DyP-type peroxidase family. Homotetramer, presumably also in the encapsulin nanocompartment. It depends on heme b as a cofactor.

Its subcellular location is the encapsulin nanocompartment. It carries out the reaction 2 a phenolic donor + H2O2 = 2 a phenolic radical donor + 2 H2O. In terms of biological role, cargo of a type 1 encapsulin nanocompartment in situ; this cargo protects against oxidative stress at low pH. When expressed in the cytoplasm (absence of the encapsulin shell gene) it is almost as protective as the intact nanocompartment; its encapsulation has a modest yet significant effect on protection against oxidative stress at low pH. A heme-dependent peroxidase, it probably does not have deferrochelatase activity. Converts guaiacol and H2O2 to tetraguaiacol, also acts on 2,2'-azino-bis(3-ethylbenzothiazoline-6-sulfonic acid) (ABTS). Retains peroxidase activity when encapsulated but has a reduced set of substrates; acts on ABTS but not guaiacol. The sequence is that of Dye-decolorizing peroxidase from Mycobacterium tuberculosis (strain ATCC 25618 / H37Rv).